A 320-amino-acid polypeptide reads, in one-letter code: Cytochrome f (320 aa).

A signal peptide spans 1–35; the sequence is MQTRNAFSWLKKQITRSISVSLMIYILTRTSISSA. Residues tyrosine 36, cysteine 56, cysteine 59, and histidine 60 each coordinate heme. The chain crosses the membrane as a helical span at residues 286–306; sequence AQGLLFFLASVILAQIFLVLK.

This sequence belongs to the cytochrome f family. In terms of assembly, the 4 large subunits of the cytochrome b6-f complex are cytochrome b6, subunit IV (17 kDa polypeptide, petD), cytochrome f and the Rieske protein, while the 4 small subunits are PetG, PetL, PetM and PetN. The complex functions as a dimer. The cofactor is heme.

The protein localises to the plastid. It localises to the chloroplast thylakoid membrane. Its function is as follows. Component of the cytochrome b6-f complex, which mediates electron transfer between photosystem II (PSII) and photosystem I (PSI), cyclic electron flow around PSI, and state transitions. The chain is Cytochrome f from Nicotiana tomentosiformis (Tobacco).